The sequence spans 1576 residues: DExH-box ATP-dependent RNA helicase DExH2 (1576 aa).

The R3H domain maps to 15–78 (EATGAWATKV…ERRLSLFKGD (64 aa)). The region spanning 227-396 (ISAVESNQVV…FGGCPVVRVP (170 aa)) is the Helicase ATP-binding domain. Residue 240-247 (GETGCGKT) coordinates ATP. The short motif at 343-346 (DEIH) is the DEIH box element. Residues 561–735 (LIVKLMKKIC…ELCLQVKMLD (175 aa)) form the Helicase C-terminal domain. Disordered regions lie at residues 1137-1165 (ATSP…MGSK), 1177-1223 (MEES…SLNN), and 1260-1576 (DMGN…PSDQ). The segment covering 1281-1301 (PNSANSMDLGNMEENTPSDLA) has biased composition (polar residues). Residues 1305 to 1319 (KKKEPKSVSKLDLGS) are compositionally biased toward basic and acidic residues. Positions 1349–1360 (KQPEKKRSRSKK) match the PH1 motif. The segment covering 1352–1363 (EKKRSRSKKRKS) has biased composition (basic residues). Positions 1381–1412 (ANENEQTEPKSANNLDLGNMKENTPSDLANEN) are enriched in polar residues. Positions 1454–1465 (KQPKKKRSRSKK) match the PH2 motif. The segment covering 1455-1467 (QPKKKRSRSKKCK) has biased composition (basic residues). Residues 1490-1508 (EQKDPESVNRLDPGKEKES) are compositionally biased toward basic and acidic residues. Polar residues predominate over residues 1509–1524 (IPSNLVSGNEQPDSNT). Over residues 1528–1537 (KKPKKKKRKL) the composition is skewed to basic residues. The short motif at 1530-1537 (PKKKKRKL) is the Nuclear localization signal element. The segment covering 1540–1562 (NFDSVNNMEEKMPSTNVLSQGNK) has biased composition (polar residues).

This sequence belongs to the DExH box helicase family. In terms of assembly, homodimer.

Its subcellular location is the nucleus. It catalyses the reaction ATP + H2O = ADP + phosphate + H(+). In terms of biological role, may function as an ATP-dependent RNA/DNA helicase. Binds DNA in vitro in a non-specific manner. The polypeptide is DExH-box ATP-dependent RNA helicase DExH2 (Arabidopsis thaliana (Mouse-ear cress)).